The chain runs to 380 residues: Glycine betaine/carnitine/choline transport ATP-binding protein OpuCA (380 aa).

Residues 2 to 236 (LKLEQVSKVY…PANEFVEEFI (235 aa)) enclose the ABC transporter domain. 35–42 (GPSGCGKT) contacts ATP. CBS domains are found at residues 255–314 (MNRT…VGDV) and 315–373 (YRSD…WGDE).

It belongs to the ABC transporter superfamily. The complex is composed of two ATP-binding proteins (OpuCA), two transmembrane proteins (OpuCB and OpuCD) and a solute-binding protein (OpuCC).

With respect to regulation, binds cyclic di-AMP (c-di-AMP), which may regulate the transporter activity. Its function is as follows. Involved in a high affinity multicomponent binding-protein-dependent transport system for glycine betaine, carnitine and choline; probably responsible for energy coupling to the transport system. This is Glycine betaine/carnitine/choline transport ATP-binding protein OpuCA (opuCA) from Bacillus subtilis (strain 168).